Here is a 277-residue protein sequence, read N- to C-terminus: 3-methyl-2-oxobutanoate hydroxymethyltransferase (277 aa).

Residues aspartate 53 and aspartate 96 each coordinate Mg(2+). 3-methyl-2-oxobutanoate is bound by residues 53-54 (DS), aspartate 96, and lysine 126. Residue glutamate 128 participates in Mg(2+) binding. The Proton acceptor role is filled by glutamate 195.

This sequence belongs to the PanB family. In terms of assembly, homodecamer; pentamer of dimers. It depends on Mg(2+) as a cofactor.

Its subcellular location is the cytoplasm. It carries out the reaction 3-methyl-2-oxobutanoate + (6R)-5,10-methylene-5,6,7,8-tetrahydrofolate + H2O = 2-dehydropantoate + (6S)-5,6,7,8-tetrahydrofolate. It functions in the pathway cofactor biosynthesis; (R)-pantothenate biosynthesis; (R)-pantoate from 3-methyl-2-oxobutanoate: step 1/2. Its function is as follows. Catalyzes the reversible reaction in which hydroxymethyl group from 5,10-methylenetetrahydrofolate is transferred onto alpha-ketoisovalerate to form ketopantoate. The sequence is that of 3-methyl-2-oxobutanoate hydroxymethyltransferase from Prosthecochloris aestuarii (strain DSM 271 / SK 413).